A 511-amino-acid chain; its full sequence is Sodium/proline symporter 2 (511 aa).

A run of 13 helical transmembrane segments spans residues 16 to 36 (WQTY…GYYG), 54 to 74 (IGPY…WMIM), 85 to 105 (LSAM…YFVV), 139 to 159 (IISG…GFVS), 175 to 195 (GLLM…YLAV), 204 to 224 (VIML…LNGI), 246 to 266 (VLGI…PHII), 286 to 306 (ISWM…GIAF), 327 to 347 (ILFH…AIMS), 381 to 401 (FLMV…WIAW), 410 to 430 (LVGN…IFSL), 438 to 458 (TGAL…IVWI), and 467 to 487 (LFGM…TYFV).

Belongs to the sodium:solute symporter (SSF) (TC 2.A.21) family.

It is found in the cell membrane. The enzyme catalyses L-proline(in) + Na(+)(in) = L-proline(out) + Na(+)(out). Its function is as follows. Catalyzes the sodium-dependent uptake of extracellular L-proline. The polypeptide is Sodium/proline symporter 2 (putP2) (Staphylococcus saprophyticus subsp. saprophyticus (strain ATCC 15305 / DSM 20229 / NCIMB 8711 / NCTC 7292 / S-41)).